Reading from the N-terminus, the 145-residue chain is UPF0735 ACT domain-containing protein CPE1414 (145 aa).

The region spanning 69 to 144 (IFNMVVTHEK…GVEKVEFVAM (76 aa)) is the ACT domain.

The protein belongs to the UPF0735 family.

The protein is UPF0735 ACT domain-containing protein CPE1414 of Clostridium perfringens (strain 13 / Type A).